The primary structure comprises 266 residues: Killer cell lectin-like receptor 8 (266 aa).

Topologically, residues 1–44 (MSEQEVTFPTMRFHKSSGLNSQVRLEGTQRSRKAGLRVCSVPWQ) are cytoplasmic. Residues 45–66 (LIVIALGILCSLRLVIVAVFVT) form a helical; Signal-anchor for type II membrane protein membrane-spanning segment. Topologically, residues 67–266 (KFFQYSQHKQ…CGKKLDKFPD (200 aa)) are extracellular. Residues Asn87 and Asn104 are each glycosylated (N-linked (GlcNAc...) asparagine). Residues 143–261 (GVKYWFCYGT…PYYCICGKKL (119 aa)) form the C-type lectin domain. 4 cysteine pairs are disulfide-bonded: Cys149/Cys154, Cys167/Cys255, Cys171/Cys257, and Cys236/Cys249.

In terms of assembly, homodimer; disulfide-linked. Interacts with the adapter protein TYROBP/DAP12; the interaction leads to natural killer cell activation.

Its subcellular location is the cell membrane. Functionally, receptor on natural killer (NK) cells for class I MHC. This is Killer cell lectin-like receptor 8 (Klra8) from Mus musculus (Mouse).